Consider the following 275-residue polypeptide: MENRYAVHPEQVKRFTTEELRRHFHIPTLFVSGELKLYYSHEDRVVIGGVMPSAEPLKLDAGDFLRTEYFLERREIGIVNVGGQGTVTVDGEAFVLEHKDFLYIGLGHEDVQFASASGEEAKFYLVSATAHQAYPTQKAAIAELTPNHLGEASASNVRNLYQVIHANGIQSCQLMMGITQLETNNTWNTMPAHIHDRRMEVYLYLDIEEDARVFHFMGEPSETRHLVLANEEAVISPAWSIHSGSGTANYSFIWAMAGENYTFKDMDFVPMDQLR.

Residues H193, H195, E200, and H242 each coordinate Zn(2+).

Belongs to the KduI family. The cofactor is Zn(2+).

The enzyme catalyses 5-dehydro-4-deoxy-D-glucuronate = 3-deoxy-D-glycero-2,5-hexodiulosonate. Its pathway is glycan metabolism; pectin degradation; 2-dehydro-3-deoxy-D-gluconate from pectin: step 4/5. Catalyzes the isomerization of 5-dehydro-4-deoxy-D-glucuronate to 3-deoxy-D-glycero-2,5-hexodiulosonate. This is 4-deoxy-L-threo-5-hexosulose-uronate ketol-isomerase from Bacillus pumilus (strain SAFR-032).